A 273-amino-acid chain; its full sequence is Orotidine 5'-phosphate decarboxylase (273 aa).

Residue Lys-96 is the Proton donor of the active site.

The protein belongs to the OMP decarboxylase family. Type 2 subfamily.

The catalysed reaction is orotidine 5'-phosphate + H(+) = UMP + CO2. Its pathway is pyrimidine metabolism; UMP biosynthesis via de novo pathway; UMP from orotate: step 2/2. The chain is Orotidine 5'-phosphate decarboxylase from Flavobacterium johnsoniae (strain ATCC 17061 / DSM 2064 / JCM 8514 / BCRC 14874 / CCUG 350202 / NBRC 14942 / NCIMB 11054 / UW101) (Cytophaga johnsonae).